Here is a 209-residue protein sequence, read N- to C-terminus: Guanylate kinase (209 aa).

The Guanylate kinase-like domain maps to 9–188 (GIMLVISSPS…SVHQIKCIFT (180 aa)). An ATP-binding site is contributed by 16–23 (SPSGGGKT).

Belongs to the guanylate kinase family.

It is found in the cytoplasm. The catalysed reaction is GMP + ATP = GDP + ADP. Functionally, essential for recycling GMP and indirectly, cGMP. This is Guanylate kinase from Ehrlichia canis (strain Jake).